The primary structure comprises 307 residues: UDP-N-acetylenolpyruvoylglucosamine reductase (307 aa).

Residues 34–199 (RVGGPAQVLF…TAVRFRGTPS (166 aa)) enclose the FAD-binding PCMH-type domain. Arginine 179 is a catalytic residue. Serine 228 acts as the Proton donor in catalysis. Glutamate 298 is a catalytic residue.

It belongs to the MurB family. The cofactor is FAD.

It localises to the cytoplasm. It catalyses the reaction UDP-N-acetyl-alpha-D-muramate + NADP(+) = UDP-N-acetyl-3-O-(1-carboxyvinyl)-alpha-D-glucosamine + NADPH + H(+). It participates in cell wall biogenesis; peptidoglycan biosynthesis. Functionally, cell wall formation. This chain is UDP-N-acetylenolpyruvoylglucosamine reductase, found in Bradyrhizobium sp. (strain ORS 278).